A 1829-amino-acid chain; its full sequence is DNA polymerase (1829 aa).

DOD-type homing endonuclease domains lie at 527-668 and 1136-1269; these read LSGI…SLGI and FLGY…SLGV.

This sequence belongs to the DNA polymerase type-B family. In terms of processing, this protein undergoes a protein self splicing that involves a post-translational excision of the three intervening regions (inteins) followed by peptide ligation.

It catalyses the reaction DNA(n) + a 2'-deoxyribonucleoside 5'-triphosphate = DNA(n+1) + diphosphate. The chain is DNA polymerase (pol) from Thermococcus aggregans.